Consider the following 156-residue polypeptide: Protein US1 (156 aa).

2 disordered regions span residues 90–114 (RSRSRTAESGRSSSSSSVSVLSDGD) and 133–156 (ARRWTQRHDSEERASQQAKNDSTS). A compositionally biased stretch (low complexity) spans 96–111 (AESGRSSSSSSVSVLS). Positions 147 to 156 (SQQAKNDSTS) are enriched in polar residues.

This chain is Protein US1 (US1), found in Homo sapiens (Human).